We begin with the raw amino-acid sequence, 155 residues long: 3-hydroxyacyl-[acyl-carrier-protein] dehydratase FabZ (155 aa).

The active site involves His-58.

Belongs to the thioester dehydratase family. FabZ subfamily.

It localises to the cytoplasm. The enzyme catalyses a (3R)-hydroxyacyl-[ACP] = a (2E)-enoyl-[ACP] + H2O. In terms of biological role, involved in unsaturated fatty acids biosynthesis. Catalyzes the dehydration of short chain beta-hydroxyacyl-ACPs and long chain saturated and unsaturated beta-hydroxyacyl-ACPs. This chain is 3-hydroxyacyl-[acyl-carrier-protein] dehydratase FabZ, found in Rhizobium etli (strain ATCC 51251 / DSM 11541 / JCM 21823 / NBRC 15573 / CFN 42).